We begin with the raw amino-acid sequence, 220 residues long: Putative DNA repair glycosylase MJ1434 (220 aa).

The [4Fe-4S] cluster site is built by C202, C208, C211, and C217.

This sequence belongs to the Nth/MutY family. Requires [4Fe-4S] cluster as cofactor.

The chain is Putative DNA repair glycosylase MJ1434 from Methanocaldococcus jannaschii (strain ATCC 43067 / DSM 2661 / JAL-1 / JCM 10045 / NBRC 100440) (Methanococcus jannaschii).